The primary structure comprises 914 residues: MSAFRNHCPHLDSVGEITKEDLIQKSQGTCQDCKVRGPNLWACLENRCSYVGCGESQVDHSTIHSQETKHYLTVNLTTLRVWCYACSKEVFLDRKLGTQPSLPHVRQPHQIQENSVQDFKIPSNTTLKTPLVAVFDDLDIEVDEEDELRARGLTGLKNIGNTCYMNAALQALSNCPPLTQFFLDCGGLARTDKKPAICKSYLKLMTELWHKSRPGSVVPTNLFQGIKTVNPTFRGYSQQDAQEFLRCLMDLLHEELKEQVMEVEDPQTITTEETMEEDKSQSDVDFQSCESCSNSDKAENENGSSCFSEDNNETTMLIQDDENNSEMSKDWQKEKMCNKINKVNSEGELDKDRDSISETVDLNNQETVKVQIHSRASEYITDVHSNDLSTPQILPSNESINPRLSASPPKSGNLWPGLAPPHKKAQSASPKRKKQHKKYRSVISDIFDGTIISSVQCLTCDRVSVTLETFQDLSLPIPGKEDLAKLHSSSHPTSIVKAGSCGEAYAPQGWIAFFMEYVKRFVVSCVPSWFWGPVVTLQDCLAAFFARDELKGDNMYSCEKCKKLRNGVKFCKVQKFPEILCIHLKRFRHELMFSTKISTHVSFPLEGLDLQPFLAKDSPAQIVTYDLLSVICHHGTASSGHYIAYCRNNLNNLWYEFDDQSVTEVSESTVQNAEAYVLFYRKSSEEAQKERRRISNLLNIMEPSLLQFYISRQWLNKFKTFAEPGPISNNDFLCIHGGVPPRKAGYIEDLVLMLPQNIWDNLYSRYGGGPAVNHLYICHTCQIEAEEIEKKKKNRRKTELEIFIRLNRAFQKEDSPATFYCISMQWFREWESFVKGKDGDPPGPIDNTKIAVTKCGSVMLRQGADSGQISEETWNFLQSIYGGGPEVILRPPVVHVDPDILQAEEKIEVETRSL.

The segment at 6–109 adopts a UBP-type zinc-finger fold; sequence NHCPHLDSVG…PSLPHVRQPH (104 aa). 12 residues coordinate Zn(2+): Cys-8, His-10, Cys-30, Cys-33, Cys-43, Cys-48, Cys-53, His-60, His-64, His-70, Cys-83, and Cys-86. The region spanning 154 to 683 is the USP domain; it reads TGLKNIGNTC…EAYVLFYRKS (530 aa). The Nucleophile role is filled by Cys-163. The interval 266–313 is disordered; the sequence is PQTITTEETMEEDKSQSDVDFQSCESCSNSDKAENENGSSCFSEDNNE. The span at 283–313 shows a compositional bias: polar residues; sequence DVDFQSCESCSNSDKAENENGSSCFSEDNNE. Residues Ser-345 and Ser-407 each carry the phosphoserine modification. The span at 387 to 410 shows a compositional bias: polar residues; it reads DLSTPQILPSNESINPRLSASPPK. Residues 387 to 437 are disordered; it reads DLSTPQILPSNESINPRLSASPPKSGNLWPGLAPPHKKAQSASPKRKKQHK. Residues 421 to 437 are compositionally biased toward basic residues; it reads PHKKAQSASPKRKKQHK. His-641 serves as the catalytic Proton acceptor. DUSP domains lie at 685-778 and 786-893; these read EEAQ…LYIC and EEIE…RPPV.

It belongs to the peptidase C19 family. USP20/USP33 subfamily. Interacts with VHL, leading to its ubiquitination and subsequent degradation. Interacts with ARRB1 and ARRB2. Interacts with ADRB2. Interacts with DIO2. Interacts with ROBO1. Interacts with SELENBP1; in a selenium-dependent manner. Interacts with CCP110. Post-translationally, ubiquitinated via a VHL-dependent pathway for proteasomal degradation.

It localises to the cytoplasm. The protein localises to the perinuclear region. It is found in the cytoskeleton. Its subcellular location is the microtubule organizing center. The protein resides in the centrosome. The enzyme catalyses Thiol-dependent hydrolysis of ester, thioester, amide, peptide and isopeptide bonds formed by the C-terminal Gly of ubiquitin (a 76-residue protein attached to proteins as an intracellular targeting signal).. Functionally, deubiquitinating enzyme involved in various processes such as centrosome duplication, cellular migration and beta-2 adrenergic receptor/ADRB2 recycling. Involved in regulation of centrosome duplication by mediating deubiquitination of CCP110 in S and G2/M phase, leading to stabilize CCP110 during the period which centrioles duplicate and elongate. Involved in cell migration via its interaction with intracellular domain of ROBO1, leading to regulate the Slit signaling. Plays a role in commissural axon guidance cross the ventral midline of the neural tube in a Slit-dependent manner, possibly by mediating the deubiquitination of ROBO1. Acts as a regulator of G-protein coupled receptor (GPCR) signaling by mediating the deubiquitination of beta-arrestins (ARRB1 and ARRB2) and beta-2 adrenergic receptor (ADRB2). Plays a central role in ADRB2 recycling and resensitization after prolonged agonist stimulation by constitutively binding ADRB2, mediating deubiquitination of ADRB2 and inhibiting lysosomal trafficking of ADRB2. Upon dissociation, it is probably transferred to the translocated beta-arrestins, leading to beta-arrestins deubiquitination and disengagement from ADRB2. This suggests the existence of a dynamic exchange between the ADRB2 and beta-arrestins. Deubiquitinates DIO2, thereby regulating thyroid hormone regulation. Mediates deubiquitination of both 'Lys-48'- and 'Lys-63'-linked polyubiquitin chains. The polypeptide is Ubiquitin carboxyl-terminal hydrolase 33 (USP33) (Pongo abelii (Sumatran orangutan)).